A 257-amino-acid chain; its full sequence is Protein LigF (257 aa).

Positions 1-82 constitute a GST N-terminal domain; it reads MTLKLYSFGP…YLEDVFPESG (82 aa). In terms of domain architecture, GST C-terminal spans 89 to 257; it reads DPFKRAEMRV…LLKRQNEKVA (169 aa).

Belongs to the GST superfamily.

Its function is as follows. Lignin degradation enzyme. The chain is Protein LigF (ligF) from Sphingobium sp. (strain NBRC 103272 / SYK-6).